We begin with the raw amino-acid sequence, 549 residues long: Glucose-6-phosphate isomerase (549 aa).

Glu355 serves as the catalytic Proton donor. Residues His387 and Lys515 contribute to the active site.

It belongs to the GPI family.

The protein resides in the cytoplasm. The enzyme catalyses alpha-D-glucose 6-phosphate = beta-D-fructose 6-phosphate. The protein operates within carbohydrate biosynthesis; gluconeogenesis. It functions in the pathway carbohydrate degradation; glycolysis; D-glyceraldehyde 3-phosphate and glycerone phosphate from D-glucose: step 2/4. In terms of biological role, catalyzes the reversible isomerization of glucose-6-phosphate to fructose-6-phosphate. In Haemophilus influenzae (strain ATCC 51907 / DSM 11121 / KW20 / Rd), this protein is Glucose-6-phosphate isomerase.